The primary structure comprises 407 residues: Phosphopentomutase (407 aa).

Aspartate 10, aspartate 306, histidine 311, aspartate 347, histidine 348, and histidine 359 together coordinate Mn(2+).

Belongs to the phosphopentomutase family. Mn(2+) is required as a cofactor.

The protein resides in the cytoplasm. It catalyses the reaction 2-deoxy-alpha-D-ribose 1-phosphate = 2-deoxy-D-ribose 5-phosphate. The catalysed reaction is alpha-D-ribose 1-phosphate = D-ribose 5-phosphate. It functions in the pathway carbohydrate degradation; 2-deoxy-D-ribose 1-phosphate degradation; D-glyceraldehyde 3-phosphate and acetaldehyde from 2-deoxy-alpha-D-ribose 1-phosphate: step 1/2. Its function is as follows. Isomerase that catalyzes the conversion of deoxy-ribose 1-phosphate (dRib-1-P) and ribose 1-phosphate (Rib-1-P) to deoxy-ribose 5-phosphate (dRib-5-P) and ribose 5-phosphate (Rib-5-P), respectively. The chain is Phosphopentomutase from Escherichia coli (strain UTI89 / UPEC).